A 490-amino-acid polypeptide reads, in one-letter code: Betaine aldehyde dehydrogenase (490 aa).

The K(+) site is built by Ser-26, Ile-27, and Asp-93. 150–152 (GAW) contacts NAD(+). The active-site Charge relay system is Lys-162. An NAD(+)-binding site is contributed by 176 to 179 (KPSE). K(+) is bound at residue Val-180. 230–233 (GTDT) lines the NAD(+) pocket. Leu-246 serves as a coordination point for K(+). Glu-252 acts as the Proton acceptor in catalysis. NAD(+) contacts are provided by Gly-254, Cys-286, and Glu-387. The Nucleophile role is filled by Cys-286. Position 286 is a cysteine sulfenic acid (-SOH) (Cys-286). K(+) contacts are provided by Lys-457 and Gly-460. The active-site Charge relay system is the Glu-464.

The protein belongs to the aldehyde dehydrogenase family. As to quaternary structure, dimer of dimers. K(+) serves as cofactor.

The enzyme catalyses betaine aldehyde + NAD(+) + H2O = glycine betaine + NADH + 2 H(+). Its pathway is amine and polyamine biosynthesis; betaine biosynthesis via choline pathway; betaine from betaine aldehyde: step 1/1. Its function is as follows. Involved in the biosynthesis of the osmoprotectant glycine betaine. Catalyzes the irreversible oxidation of betaine aldehyde to the corresponding acid. This is Betaine aldehyde dehydrogenase from Pseudomonas syringae pv. tomato (strain ATCC BAA-871 / DC3000).